The primary structure comprises 380 residues: MTAEVQQPSVQTPAHSSPMTEKPVQTPVMETSSSSSSTKAKKTNAGIRRPEKPPYSYIALIVMAIQSSPTKRLTLSEIYQFLQSRFPFFRGSYQGWKNSVRHNLSLNECFIKLPKGLGRPGKGHYWTIDPASEFMFEEGSFRRRPRGFRRKCQALKPSMYSMMNGLGFNHIPESYNFQGGGGGLSCPPNSLSLESGIGMMNGHLASNMEGMGLAGHSMPHLSTNSGHSYMGSCTGSSGTEYPHHDSSASPLLTSGGVMDPHAVYSSTASAWPSAPPTSLNNGTSYIKQQPLSPCNPGASSLQPSLPTHSLEQSYLHQNGHGTTDLQGIPRYHTQSPSMCDRKEFVFSFNAMTSSSMHSPGSSSYYHHQQVSYQDIKPCVM.

The span at 1–19 (MTAEVQQPSVQTPAHSSPM) shows a compositional bias: polar residues. The interval 1 to 49 (MTAEVQQPSVQTPAHSSPMTEKPVQTPVMETSSSSSSTKAKKTNAGIRR) is disordered. A DNA-binding region (fork-head) is located at residues 52–146 (KPPYSYIALI…EEGSFRRRPR (95 aa)).

The protein resides in the nucleus. The sequence is that of Forkhead box protein F1 (foxf1) from Danio rerio (Zebrafish).